Here is a 90-residue protein sequence, read N- to C-terminus: U7-theraphotoxin-Hhn1c (90 aa).

Positions 1–19 (MKTAIFTVVLALAVFAVLS) are cleaved as a signal peptide. Residues 20 to 50 (FGWEANEKALSEEFTELIHEKEAASETEARE) constitute a propeptide that is removed on maturation. 3 disulfides stabilise this stretch: Cys51–Cys65, Cys58–Cys70, and Cys64–Cys81.

It belongs to the neurotoxin 10 (Hwtx-1) family. 13 (Hntx-13) subfamily. As to expression, expressed by the venom gland.

The protein resides in the secreted. Ion channel inhibitor. The sequence is that of U7-theraphotoxin-Hhn1c from Cyriopagopus hainanus (Chinese bird spider).